The following is a 22-amino-acid chain: Sex pheromone inhibitor determinant (22 aa).

Residues 1 to 14 (MSKRAMKKIIPLIT) constitute a propeptide that is removed on maturation.

It localises to the secreted. Acts as a competitive inhibitor of the CAD1 pheromone. The protein is Sex pheromone inhibitor determinant (iad) of Enterococcus faecalis (strain ATCC 700802 / V583).